The chain runs to 92 residues: Small ribosomal subunit protein uS19 (92 aa).

Belongs to the universal ribosomal protein uS19 family.

Protein S19 forms a complex with S13 that binds strongly to the 16S ribosomal RNA. This chain is Small ribosomal subunit protein uS19, found in Polynucleobacter asymbioticus (strain DSM 18221 / CIP 109841 / QLW-P1DMWA-1) (Polynucleobacter necessarius subsp. asymbioticus).